We begin with the raw amino-acid sequence, 263 residues long: Hydroxyethylthiazole kinase 1 (263 aa).

Residue Met42 coordinates substrate. Positions 118 and 164 each coordinate ATP. Gly191 lines the substrate pocket.

Belongs to the Thz kinase family. Requires Mg(2+) as cofactor.

It carries out the reaction 5-(2-hydroxyethyl)-4-methylthiazole + ATP = 4-methyl-5-(2-phosphooxyethyl)-thiazole + ADP + H(+). Its pathway is cofactor biosynthesis; thiamine diphosphate biosynthesis; 4-methyl-5-(2-phosphoethyl)-thiazole from 5-(2-hydroxyethyl)-4-methylthiazole: step 1/1. Functionally, catalyzes the phosphorylation of the hydroxyl group of 4-methyl-5-beta-hydroxyethylthiazole (THZ). The sequence is that of Hydroxyethylthiazole kinase 1 from Clostridium botulinum (strain 657 / Type Ba4).